A 365-amino-acid polypeptide reads, in one-letter code: Probable protein kinase At2g41970 (365 aa).

Positions 1–50 (MFCCGGADEEPAGPPANQYAAPPNKAGNPNFGGGNRGEPRNPNAPRSGAP) are disordered. Positions 73–354 (FGNKALIGEG…IVVKALQPLL (282 aa)) constitute a Protein kinase domain. Residues 79–87 (IGEGSYGRV) and lysine 100 contribute to the ATP site. Phosphotyrosine is present on tyrosine 146. Catalysis depends on aspartate 204, which acts as the Proton acceptor. 2 positions are modified to phosphoserine: serine 208 and serine 238. Phosphothreonine is present on residues threonine 239 and threonine 244. Tyrosine 252 is subject to Phosphotyrosine.

The protein belongs to the protein kinase superfamily. Tyr protein kinase family.

In Arabidopsis thaliana (Mouse-ear cress), this protein is Probable protein kinase At2g41970.